Reading from the N-terminus, the 133-residue chain is Small ribosomal subunit protein uS8c (133 aa).

Disordered stretches follow at residues 1 to 23 and 44 to 133; these read MGNDAIDDVTTAPRNASSRGAET and FSGN…HVWR. Polar residues-rich tracts occupy residues 12–23 and 55–66; these read APRNASSRGAET and TNRFPVSTSKYQ. The span at 67 to 81 shows a compositional bias: basic residues; sequence GRTRKARITTRRRVS. Basic and acidic residues predominate over residues 114–133; the sequence is TDREARQKRIGGEAPRHVWR.

Belongs to the universal ribosomal protein uS8 family. In terms of assembly, part of the 30S ribosomal subunit.

It localises to the plastid. The protein resides in the chloroplast. Functionally, one of the primary rRNA binding proteins, it binds directly to 16S rRNA central domain where it helps coordinate assembly of the platform of the 30S subunit. The chain is Small ribosomal subunit protein uS8c (rps8) from Selaginella uncinata (Blue spike-moss).